A 79-amino-acid polypeptide reads, in one-letter code: MTKEQILVDVQEAVAEKLGKDVSEITAEKSFKDDLGADSLEVMEMVMDLEDKFDITIEDEDAEKLATVGDVVAYIETKL.

The 76-residue stretch at 4-79 (EQILVDVQEA…DVVAYIETKL (76 aa)) folds into the Carrier domain. Ser-39 carries the O-(pantetheine 4'-phosphoryl)serine modification.

This sequence belongs to the acyl carrier protein (ACP) family. In terms of processing, 4'-phosphopantetheine is transferred from CoA to a specific serine of apo-ACP by AcpS. This modification is essential for activity because fatty acids are bound in thioester linkage to the sulfhydryl of the prosthetic group.

The protein localises to the cytoplasm. It functions in the pathway lipid metabolism; fatty acid biosynthesis. In terms of biological role, carrier of the growing fatty acid chain in fatty acid biosynthesis. The sequence is that of Acyl carrier protein from Exiguobacterium sp. (strain ATCC BAA-1283 / AT1b).